Consider the following 199-residue polypeptide: Small ribosomal subunit protein eS1 (199 aa).

The protein belongs to the eukaryotic ribosomal protein eS1 family.

This Pyrococcus abyssi (strain GE5 / Orsay) protein is Small ribosomal subunit protein eS1.